The chain runs to 151 residues: Methylglyoxal synthase (151 aa).

The region spanning 6–151 is the MGS-like domain; sequence RVMPAHKHIA…DYDAYLAERV (146 aa). Substrate is bound by residues H19, K23, 45 to 48, and 65 to 66; these read TGTT and SG. The Proton donor/acceptor role is filled by D71. H98 is a substrate binding site.

It belongs to the methylglyoxal synthase family.

It carries out the reaction dihydroxyacetone phosphate = methylglyoxal + phosphate. In terms of biological role, catalyzes the formation of methylglyoxal from dihydroxyacetone phosphate. This is Methylglyoxal synthase from Aliivibrio fischeri (strain ATCC 700601 / ES114) (Vibrio fischeri).